We begin with the raw amino-acid sequence, 100 residues long: Aspartyl/glutamyl-tRNA(Asn/Gln) amidotransferase subunit C (100 aa).

It belongs to the GatC family. As to quaternary structure, heterotrimer of A, B and C subunits.

It catalyses the reaction L-glutamyl-tRNA(Gln) + L-glutamine + ATP + H2O = L-glutaminyl-tRNA(Gln) + L-glutamate + ADP + phosphate + H(+). The enzyme catalyses L-aspartyl-tRNA(Asn) + L-glutamine + ATP + H2O = L-asparaginyl-tRNA(Asn) + L-glutamate + ADP + phosphate + 2 H(+). Functionally, allows the formation of correctly charged Asn-tRNA(Asn) or Gln-tRNA(Gln) through the transamidation of misacylated Asp-tRNA(Asn) or Glu-tRNA(Gln) in organisms which lack either or both of asparaginyl-tRNA or glutaminyl-tRNA synthetases. The reaction takes place in the presence of glutamine and ATP through an activated phospho-Asp-tRNA(Asn) or phospho-Glu-tRNA(Gln). The protein is Aspartyl/glutamyl-tRNA(Asn/Gln) amidotransferase subunit C of Streptococcus pneumoniae (strain JJA).